The primary structure comprises 437 residues: Membrane protein NfeD1b (437 aa).

5 consecutive transmembrane segments (helical) span residues 2-22, 231-251, 253-273, 288-308, and 316-336; these read LQIK…LLGV, WLTN…GLTV, LFSP…LLFF, LLFI…GGII, and IIAS…SLLI.

It belongs to the NfeD family.

It is found in the cell membrane. The chain is Membrane protein NfeD1b from Bacillus subtilis (strain 168).